Reading from the N-terminus, the 1396-residue chain is Sterol 3-beta-glucosyltransferase (1396 aa).

Positions 1 to 16 (MRPLLDEAKRRVDRRL) are enriched in basic and acidic residues. Disordered regions lie at residues 1 to 59 (MRPL…TKEG), 82 to 193 (HARF…AAPV), and 206 to 233 (SKGSMNQSPRSPPAETQEEQSQEQTSAS). Residues 18-28 (ASRQSLSTSRI) show a composition bias toward polar residues. Basic and acidic residues-rich tracts occupy residues 35 to 44 (ERLKDDHDAQ) and 82 to 108 (HARFDDSSDSERDTDRPPQKRTEKESQ). Residues 156 to 175 (GSSQRQGGAQTEPSTGNQMS) show a composition bias toward polar residues. Residues 237 to 288 (LRLMEMFGFESPEKVLVEYACSLVQSMLLQGYMYVTEGHICFYAYLPRKSTV) form the GRAM 1 domain. The region spanning 289–387 (AIKSGYLYKR…WVKSLQKVIF (99 aa)) is the PH domain. 2 stretches are compositionally biased toward polar residues: residues 459 to 479 (QAKNPSRESPQPGRTTPQSRA) and 487 to 497 (SLTSGLSQVLG). Disordered regions lie at residues 459-531 (QAKN…RDLS) and 576-635 (FRRQ…VQQS). Positions 585-595 (QFGRRHSDETA) are enriched in basic and acidic residues. Residues 719-785 (DRFRAHFALP…KDVENVEKEK (67 aa)) enclose the GRAM 2 domain. The disordered stretch occupies residues 841 to 880 (EQDESEAAKAEHRMLQEARKDASGGLIPQTPSDESPEIHP). Positions 846–862 (EAAKAEHRMLQEARKDA) are enriched in basic and acidic residues. Residues S907, R908, D910, A1210, H1212, H1225, G1229, T1230, D1249, and Q1250 each contribute to the UDP-alpha-D-glucose site.

This sequence belongs to the glycosyltransferase 28 family.

The protein resides in the cytoplasm. It localises to the preautophagosomal structure membrane. It carries out the reaction a sterol + UDP-alpha-D-glucose = a sterol 3-beta-D-glucoside + UDP + H(+). It catalyses the reaction ergosterol + UDP-alpha-D-glucose = ergosteryl 3-beta-D-glucoside + UDP + H(+). Sterol glycosyltransferase responsible for the glycosylation of ergosterol to form ergosterol-glucoside. The protein is Sterol 3-beta-glucosyltransferase of Aspergillus terreus (strain NIH 2624 / FGSC A1156).